The sequence spans 104 residues: UPF0213 protein PA3854 (104 aa).

The GIY-YIG domain occupies K13–R88.

It belongs to the UPF0213 family.

This Pseudomonas aeruginosa (strain ATCC 15692 / DSM 22644 / CIP 104116 / JCM 14847 / LMG 12228 / 1C / PRS 101 / PAO1) protein is UPF0213 protein PA3854.